The sequence spans 703 residues: uncharacterized protein (703 aa).

Residues 1–23 (MKQIMIFLTSFMLLAMTGQTALA) form the signal peptide. The chain crosses the membrane as a helical span at residues 673–693 (MYIGVLALIMVVAAVFIWIAV).

The protein localises to the cell membrane. This is an uncharacterized protein from Bacillus subtilis (strain 168).